The chain runs to 373 residues: D-amino-acid transaminase, chloroplastic (373 aa).

A chloroplast-targeting transit peptide spans 1-57 (MAGLSLEFTVNTWNLRSLSQVPCPLRHGFRFPRRLTRRRTILMCSDSSSQSWNVPVL). Residue arginine 128 coordinates pyridoxal 5'-phosphate. The active-site Proton acceptor is the lysine 222. An N6-(pyridoxal phosphate)lysine modification is found at lysine 222. Glutamate 255 is a pyridoxal 5'-phosphate binding site.

It belongs to the class-IV pyridoxal-phosphate-dependent aminotransferase family. As to quaternary structure, homodimer. It depends on pyridoxal 5'-phosphate as a cofactor.

The protein resides in the plastid. It localises to the chloroplast. It carries out the reaction D-alanine + 2-oxoglutarate = D-glutamate + pyruvate. The catalysed reaction is 4-amino-4-deoxychorismate = 4-aminobenzoate + pyruvate + H(+). Its pathway is cofactor biosynthesis; tetrahydrofolate biosynthesis; 4-aminobenzoate from chorismate: step 2/2. Its activity is regulated as follows. Inhibited by hydroxylamine or amino-oxyacetic acid. In terms of biological role, amino acid aminotransferase showing activity for D-Asp and D-Ala as amino donors with 2-oxoglutarate as an amino acceptor. Can also use D-Met, D-Tyr, D-Phe, D-Gln, D-Trp and D-Asn as substrates, but no activity with L-Asp, L-Ala, L-Leu, L-Ile or L-Val. Also catalyzes the reverse reaction where an amino group is transferred from D-Glu to pyruvate or oxaloacetate to produce D-Ala or D-Asp, respectively. Also involved in folate biosynthesis, acting as an aminodeoxychorismate lyase converting 4-amino-4-deoxychorismate (ADC) to p-aminobenzoate (PABA). The protein is D-amino-acid transaminase, chloroplastic of Arabidopsis thaliana (Mouse-ear cress).